The chain runs to 353 residues: GDP-mannose transporter (353 aa).

Residues 1 to 31 (MGLLLSYLFGYIFYSVNKKFHIMEKFGASNS) are Cytoplasmic-facing. Residues 32 to 52 (IVNNGPVSIFAYCASSILMTV) form a helical membrane-spanning segment. Residues 53-66 (TNKFVVGAYEFNLN) are Lumenal-facing. A helical membrane pass occupies residues 67–87 (FFLLAVQAAVCLVTIATLKGL). Residues 88–102 (GIITYRQFNKDEAKK) are Cytoplasmic-facing. The chain crosses the membrane as a helical span at residues 103–122 (WFPIAFLLVLMIYTSSKALQ). Over 123-125 (YLS) the chain is Lumenal. A helical transmembrane segment spans residues 126 to 148 (IPVYTIFKNLTIILIAYGEVIWF). Residues 149–154 (GGKVTT) are Cytoplasmic-facing. A helical transmembrane segment spans residues 155 to 172 (MALGSFILMVLSSVIAYY). Residues 173 to 187 (GDTAETGEKTAEMHL) are Lumenal-facing. The helical transmembrane segment at 188–208 (LYLGYAWMFTNCFSSAAFVLI) threads the bilayer. Topologically, residues 209–227 (MRKRIKLTNFKDFDTMYYN) are cytoplasmic. A helical membrane pass occupies residues 228–248 (NLLSLPLLLVFSFLFEDWSSV). The Lumenal portion of the chain corresponds to 249–262 (NLNKNFPPDNRNTT). Residue N260 is glycosylated (N-linked (GlcNAc...) asparagine). The chain crosses the membrane as a helical span at residues 263 to 283 (IFVMILSGASSVGISYCSAWC). Topologically, residues 284 to 290 (VRVTSST) are cytoplasmic. Residues 291–313 (TYSMVGALNKLPIALSGLVFFNA) traverse the membrane as a helical segment. Residues 314-316 (AVN) lie on the Lumenal side of the membrane. Residues 317–336 (FWSVSSIFVGFLAGVFYAVA) traverse the membrane as a helical segment. Over 337-353 (KQKQQKENAQQLPVANK) the chain is Cytoplasmic.

This sequence belongs to the TPT transporter family. SLC35D subfamily. In terms of assembly, homooligomer.

It localises to the golgi apparatus membrane. The protein resides in the cytoplasmic vesicle membrane. The protein localises to the endoplasmic reticulum membrane. Involved in the import of GDP-mannose from the cytoplasm into the Golgi lumen. The chain is GDP-mannose transporter (VRG4) from Meyerozyma guilliermondii (strain ATCC 6260 / CBS 566 / DSM 6381 / JCM 1539 / NBRC 10279 / NRRL Y-324) (Yeast).